The following is a 44-amino-acid chain: Small ribosomal subunit protein eS31 (44 aa).

Positions 18, 21, 35, and 38 each coordinate Zn(2+). Residues 18–38 form a C4-type zinc finger; sequence CPRCGDTVLAEHEDRQHCGKC.

The protein belongs to the eukaryotic ribosomal protein eS31 family. As to quaternary structure, part of the 30S ribosomal subunit. The cofactor is Zn(2+).

The sequence is that of Small ribosomal subunit protein eS31 from Haloarcula marismortui (strain ATCC 43049 / DSM 3752 / JCM 8966 / VKM B-1809) (Halobacterium marismortui).